The primary structure comprises 141 residues: Cystatin (141 aa).

The first 26 residues, 1–26 (MVRSQLPVAAPLRLLCALLLLPSATM), serve as a signal peptide directing secretion. Residues 29 to 129 (GGLSPRSVTD…CHFQVWSRPW (101 aa)) enclose the Cystatin domain. Positions 73–77 (QVVSG) match the Secondary area of contact motif. Intrachain disulfides connect Cys-91/Cys-107 and Cys-120/Cys-140.

Belongs to the cystatin family. Expressed at a low level by the venom gland (at protein level).

The protein resides in the secreted. Its function is as follows. Inhibits various C1 cysteine proteases including cathepsin L, papain and cathepsin B. This protein has no toxic activity and its function in the venom is unknown. It may play a role as a housekeeping or regulatory protein. The protein is Cystatin of Micropechis ikaheca (New Guinean small-eyed snake).